Consider the following 335-residue polypeptide: Ketol-acid reductoisomerase (NADP(+)) (335 aa).

Residues alanine 2 to threonine 182 form the KARI N-terminal Rossmann domain. Residues tyrosine 25–glutamine 28, arginine 48, serine 51, serine 53, and aspartate 83–glutamine 86 contribute to the NADP(+) site. The active site involves histidine 108. An NADP(+)-binding site is contributed by glycine 134. Residues threonine 183–leucine 328 form the KARI C-terminal knotted domain. Positions 191, 195, 227, and 231 each coordinate Mg(2+). Serine 252 serves as a coordination point for substrate.

Belongs to the ketol-acid reductoisomerase family. It depends on Mg(2+) as a cofactor.

The catalysed reaction is (2R)-2,3-dihydroxy-3-methylbutanoate + NADP(+) = (2S)-2-acetolactate + NADPH + H(+). It carries out the reaction (2R,3R)-2,3-dihydroxy-3-methylpentanoate + NADP(+) = (S)-2-ethyl-2-hydroxy-3-oxobutanoate + NADPH + H(+). The protein operates within amino-acid biosynthesis; L-isoleucine biosynthesis; L-isoleucine from 2-oxobutanoate: step 2/4. It participates in amino-acid biosynthesis; L-valine biosynthesis; L-valine from pyruvate: step 2/4. In terms of biological role, involved in the biosynthesis of branched-chain amino acids (BCAA). Catalyzes an alkyl-migration followed by a ketol-acid reduction of (S)-2-acetolactate (S2AL) to yield (R)-2,3-dihydroxy-isovalerate. In the isomerase reaction, S2AL is rearranged via a Mg-dependent methyl migration to produce 3-hydroxy-3-methyl-2-ketobutyrate (HMKB). In the reductase reaction, this 2-ketoacid undergoes a metal-dependent reduction by NADPH to yield (R)-2,3-dihydroxy-isovalerate. The protein is Ketol-acid reductoisomerase (NADP(+)) of Methanosarcina barkeri (strain Fusaro / DSM 804).